Consider the following 386-residue polypeptide: 26S proteasome non-ATPase regulatory subunit 13 homolog B (386 aa).

Position 2 is an N-acetylalanine (A2). In terms of domain architecture, PCI spans F174 to P347.

Belongs to the proteasome subunit S11 family. As to quaternary structure, component of the 19S regulatory particle (RP/PA700) lid subcomplex of the 26S proteasome. The 26S proteasome is composed of a core protease (CP), known as the 20S proteasome, capped at one or both ends by the 19S regulatory particle (RP/PA700). The RP/PA700 complex is composed of at least 17 different subunits in two subcomplexes, the base and the lid, which form the portions proximal and distal to the 20S proteolytic core, respectively. In terms of tissue distribution, ubiquitous with highest expression in flowers.

Its function is as follows. Acts as a regulatory subunit of the 26S proteasome which is involved in the ATP-dependent degradation of ubiquitinated proteins. The sequence is that of 26S proteasome non-ATPase regulatory subunit 13 homolog B (RPN9B) from Arabidopsis thaliana (Mouse-ear cress).